The sequence spans 309 residues: Ornithine carbamoyltransferase (309 aa).

Residues 56–59 (STRT), Gln83, Arg107, and 134–137 (HPCQ) each bind carbamoyl phosphate. L-ornithine is bound by residues Asn165, Asp223, and 227 to 228 (SM). Carbamoyl phosphate-binding positions include 263 to 264 (CL) and Arg291.

Belongs to the aspartate/ornithine carbamoyltransferase superfamily. OTCase family.

The protein resides in the cytoplasm. The catalysed reaction is carbamoyl phosphate + L-ornithine = L-citrulline + phosphate + H(+). It functions in the pathway amino-acid biosynthesis; L-arginine biosynthesis; L-arginine from L-ornithine and carbamoyl phosphate: step 1/3. Its function is as follows. Reversibly catalyzes the transfer of the carbamoyl group from carbamoyl phosphate (CP) to the N(epsilon) atom of ornithine (ORN) to produce L-citrulline. This is Ornithine carbamoyltransferase from Burkholderia lata (strain ATCC 17760 / DSM 23089 / LMG 22485 / NCIMB 9086 / R18194 / 383).